We begin with the raw amino-acid sequence, 101 residues long: Small ribosomal subunit protein uS14 (101 aa).

The protein belongs to the universal ribosomal protein uS14 family. As to quaternary structure, part of the 30S ribosomal subunit. Contacts proteins S3 and S10.

Its function is as follows. Binds 16S rRNA, required for the assembly of 30S particles and may also be responsible for determining the conformation of the 16S rRNA at the A site. The polypeptide is Small ribosomal subunit protein uS14 (Novosphingobium aromaticivorans (strain ATCC 700278 / DSM 12444 / CCUG 56034 / CIP 105152 / NBRC 16084 / F199)).